Consider the following 255-residue polypeptide: Phosphoribosylformylglycinamidine synthase subunit PurQ (255 aa).

One can recognise a Glutamine amidotransferase type-1 domain in the interval 6-255 (TLILRTPGTN…TNAVKWARQV (250 aa)). Cys-96 serves as the catalytic Nucleophile. Catalysis depends on residues His-217 and Glu-219.

Part of the FGAM synthase complex composed of 1 PurL, 1 PurQ and 2 PurS subunits.

It localises to the cytoplasm. The enzyme catalyses N(2)-formyl-N(1)-(5-phospho-beta-D-ribosyl)glycinamide + L-glutamine + ATP + H2O = 2-formamido-N(1)-(5-O-phospho-beta-D-ribosyl)acetamidine + L-glutamate + ADP + phosphate + H(+). It catalyses the reaction L-glutamine + H2O = L-glutamate + NH4(+). Its pathway is purine metabolism; IMP biosynthesis via de novo pathway; 5-amino-1-(5-phospho-D-ribosyl)imidazole from N(2)-formyl-N(1)-(5-phospho-D-ribosyl)glycinamide: step 1/2. Its function is as follows. Part of the phosphoribosylformylglycinamidine synthase complex involved in the purines biosynthetic pathway. Catalyzes the ATP-dependent conversion of formylglycinamide ribonucleotide (FGAR) and glutamine to yield formylglycinamidine ribonucleotide (FGAM) and glutamate. The FGAM synthase complex is composed of three subunits. PurQ produces an ammonia molecule by converting glutamine to glutamate. PurL transfers the ammonia molecule to FGAR to form FGAM in an ATP-dependent manner. PurS interacts with PurQ and PurL and is thought to assist in the transfer of the ammonia molecule from PurQ to PurL. In Dehalococcoides mccartyi (strain ATCC BAA-2266 / KCTC 15142 / 195) (Dehalococcoides ethenogenes (strain 195)), this protein is Phosphoribosylformylglycinamidine synthase subunit PurQ.